We begin with the raw amino-acid sequence, 117 residues long: MRVKGGTVTRARRKRIMKLAKGYRGSKHRLFKTAKDQVMKSYAYAFRDRKVNKRKFRELWIARINAAARMNDISYSKLMHGLKVANIDINRKMLADLAVNDADAFKALVDEAKKALN.

The protein belongs to the bacterial ribosomal protein bL20 family.

Binds directly to 23S ribosomal RNA and is necessary for the in vitro assembly process of the 50S ribosomal subunit. It is not involved in the protein synthesizing functions of that subunit. This Limosilactobacillus reuteri (strain DSM 20016) (Lactobacillus reuteri) protein is Large ribosomal subunit protein bL20.